The chain runs to 123 residues: Thioredoxin domain-containing protein 17 (123 aa).

A Thioredoxin domain is found at 41–123 (SWCPDCVTAE…DLVRMMFTED (83 aa)). Catalysis depends on nucleophile residues Cys43 and Cys46. The cysteines at positions 43 and 46 are disulfide-linked.

It belongs to the thioredoxin family. Predominantly expressed in liver, brain and muscle. Also expressed in kidney, intestine, skin, stomach, gill and head kidney.

The protein localises to the cytoplasm. In terms of biological role, disulfide reductase. May participate in various redox reactions through the reversible oxidation of its active center dithiol to a disulfide and catalyze dithiol-disulfide exchange reactions. Has peroxidase activity and may contribute to the elimination of cellular hydrogen peroxide. May function as an antioxidant involved in response to viral infection. In Epinephelus coioides (Orange-spotted grouper), this protein is Thioredoxin domain-containing protein 17.